Here is a 460-residue protein sequence, read N- to C-terminus: MESMPSSLTHQRFGLLNKHLTRTGNTREGRMHTPPVLGFQAIMSNVTVLDNIEPLDFEMDLKTPYPVSFQVSLTGFLMLEIVLGLSSNLTVLALYCMKSNLVSSVSNIVTMNLHVLDVLVCVGCIPLTIVVVLLPLEGNNALICCFHEACVSFASVATAANVLAITLDRYDISVRPANRVLTMGRAVALLGSIWALSFFSFLVPFIEEGFFSQAGNERNQTEAEEPSNEYYTELGLYYHLLAQIPIFFFTAVVMLVTYYKILQALNIRIGTRFHSVPKKKPRKKKTISMTSTQPESTDASQSSAGRNAPLGMRTSVSVIIALRRAVKRHRERRERQKRVFRMSLLIISTFLLCWTPITVLNTVILSVGPSNFTVRLRLGFLVMAYGTTIFHPLLYAFTRQKFQKVLKSKMKKRVVSVVEADPMPNNVVIHNSWIDPKRNKKVTFEETEVRQKCLSSEDVE.

Residues methionine 1–threonine 74 lie on the Cytoplasmic side of the membrane. A helical transmembrane segment spans residues glycine 75–tyrosine 95. The Extracellular segment spans residues cysteine 96–histidine 114. The chain crosses the membrane as a helical span at residues valine 115–proline 135. The Cytoplasmic portion of the chain corresponds to leucine 136–cysteine 144. A helical transmembrane segment spans residues cysteine 145–isoleucine 165. The Extracellular portion of the chain corresponds to threonine 166–arginine 185. A helical membrane pass occupies residues alanine 186–isoleucine 206. At glutamate 207–glycine 235 the chain is on the cytoplasmic side. Residues leucine 236–valine 256 form a helical membrane-spanning segment. Residues threonine 257 to serine 343 are Extracellular-facing. Residues valine 276 to threonine 286 show a composition bias toward basic residues. Positions valine 276 to proline 309 are disordered. The segment covering isoleucine 287–glycine 305 has biased composition (polar residues). The helical transmembrane segment at leucine 344 to isoleucine 364 threads the bilayer. Topologically, residues leucine 365 to arginine 377 are cytoplasmic. A helical membrane pass occupies residues leucine 378–threonine 398. The Extracellular portion of the chain corresponds to arginine 399 to glutamate 460.

This sequence belongs to the G-protein coupled receptor 1 family.

Its subcellular location is the cell membrane. Functionally, orphan G-protein coupled receptor that regulates cilia length and structure in the Kupffer's vesicle leading to the left-right asymmetry development by establishing a directional fluid flow. The sequence is that of G-protein coupled receptor 22 (gpr22a) from Danio rerio (Zebrafish).